Here is a 736-residue protein sequence, read N- to C-terminus: MEFVSGYRDEFLDFAALLFGWFRKFVAERGTMGTSLEGRWRQLESQIRRLPQDPALWVLHVLPNRSVGISLGQGAEPGPGPGLGASRLLGDEPPLHLRDLSPYVSFVSLEDGEEGEEEEEDEEHGERPGMEKVEPQEGGEPAPPSKRFPQEAKPAPESEVTQQEASREEGSREERPEDERAPEKRKGQKNAEAAPLHLSCLLLVTDEHGTILGIDLLMDGAQGSVGQNPGTENLAPRAYALLCHSMACPMGSGDPRKPRQLTVGDAHLHRELESLVPRLGVKLAKTPMRTWGPRPGFTFASLRARTCHVCHKHSFEVKLTPCPQCSAVLYCGEACLQADWRRCPDDVSHRFWCPRLSAFMERVGELASLPFTYTAEVTSETFNKEAFLASRGLTRGYWTQLSMLIPGPGAPRYPWGSTSSLSCLLNGDPYQLLQGDGPALMPPVPLEPPRSLFGSWQDYYTWRGLSLDSPMAVLLTYPLTVYYVITHLVPQSFPELNIQNKQSLKIHVVEAGKEFDLVMVFWELLVLLPHVALELQFVGDSLPPESDQQHFTMQRDGPEVSLRPGSGVSARFNSGTKEKGGRRDLQIRVSARPYHLLQGPKPDLVIGFNSGFGLKDTWLSSLPRLQSLRVPAFFTESSEYGCVMDDQTMAVATGGGTSSPQPNPFRSPFRLRAADNCMPWYCNAFIFHLVYKPPQGGTVRSAPGPAPRPPTPAAPPVPARRRRGEKKAARGPRRRR.

2 disordered regions span residues 70-94 (SLGQ…DEPP) and 109-192 (LEDG…KNAE). Residues 110 to 123 (EDGEEGEEEEEDEE) are compositionally biased toward acidic residues. 2 stretches are compositionally biased toward basic and acidic residues: residues 124-135 (HGERPGMEKVEP) and 165-185 (ASRE…PEKR). Cys-307, Cys-310, Cys-322, Cys-325, Cys-331, Cys-335, His-349, and Cys-353 together coordinate Zn(2+). The MYND-type zinc-finger motif lies at 307-353 (CHVCHKHSFEVKLTPCPQCSAVLYCGEACLQADWRRCPDDVSHRFWC). 2 disordered regions span residues 556–583 (DGPE…GGRR) and 696–736 (GGTV…RRRR). The span at 704-718 (GPAPRPPTPAAPPVP) shows a compositional bias: pro residues. The span at 719 to 736 (ARRRRGEKKAARGPRRRR) shows a compositional bias: basic residues.

As to quaternary structure, interacts with HDAC1, HDAC3, HDAC6 and, to a lesser extent, with HDAC7. As to expression, testis-specific. Expressed in pachytene spermatocytes and all developing spermatids, but not in Sertoli, nor Leydig cells (at protein level).

It localises to the nucleus. It is found in the cytoplasm. In terms of biological role, acts as a transcriptional repressor through interaction with histone deacetylases (HDACs). May regulate haploid genes important for spermiogenesis. This Mus musculus (Mouse) protein is Zinc finger MYND domain-containing protein 15 (Zmynd15).